Consider the following 255-residue polypeptide: uncharacterized protein (255 aa).

NADP(+) is bound by residues Ile-13, Arg-37, Asp-55, Asn-81, Tyr-148, Lys-152, Val-180, and Thr-182. Tyr-148 functions as the Proton donor in the catalytic mechanism. Lys-152 serves as the catalytic Lowers pKa of active site Tyr.

The protein belongs to the short-chain dehydrogenases/reductases (SDR) family.

Functionally, involved in osmoadaptation. This is an uncharacterized protein from Emericella nidulans (strain FGSC A4 / ATCC 38163 / CBS 112.46 / NRRL 194 / M139) (Aspergillus nidulans).